Consider the following 216-residue polypeptide: Guanylate kinase (216 aa).

Residues 12-191 (GLLFVISSPS…CVKQVKNILT (180 aa)) form the Guanylate kinase-like domain. 19 to 26 (SPSGAGKS) provides a ligand contact to ATP.

Belongs to the guanylate kinase family.

The protein localises to the cytoplasm. The enzyme catalyses GMP + ATP = GDP + ADP. Its function is as follows. Essential for recycling GMP and indirectly, cGMP. This Zymomonas mobilis subsp. mobilis (strain ATCC 31821 / ZM4 / CP4) protein is Guanylate kinase.